Consider the following 233-residue polypeptide: ATP synthase subunit a (233 aa).

The next 6 membrane-spanning stretches (helical) occupy residues 27–47, 85–105, 114–134, 143–163, 189–209, and 210–230; these read ANFV…FAIL, YLAF…IGVV, VPSV…IVGV, LAHF…IELV, VFLK…HVFV, and SFLQ…GAVA.

Belongs to the ATPase A chain family. As to quaternary structure, F-type ATPases have 2 components, CF(1) - the catalytic core - and CF(0) - the membrane proton channel. CF(1) has five subunits: alpha(3), beta(3), gamma(1), delta(1), epsilon(1). CF(0) has three main subunits: a(1), b(2) and c(9-12). The alpha and beta chains form an alternating ring which encloses part of the gamma chain. CF(1) is attached to CF(0) by a central stalk formed by the gamma and epsilon chains, while a peripheral stalk is formed by the delta and b chains.

The protein resides in the cell inner membrane. In terms of biological role, key component of the proton channel; it plays a direct role in the translocation of protons across the membrane. The protein is ATP synthase subunit a of Solibacter usitatus (strain Ellin6076).